The chain runs to 293 residues: Ribosomal protein L11 methyltransferase (293 aa).

S-adenosyl-L-methionine contacts are provided by Thr-145, Gly-166, Asp-188, and Asn-230.

Belongs to the methyltransferase superfamily. PrmA family.

The protein resides in the cytoplasm. The catalysed reaction is L-lysyl-[protein] + 3 S-adenosyl-L-methionine = N(6),N(6),N(6)-trimethyl-L-lysyl-[protein] + 3 S-adenosyl-L-homocysteine + 3 H(+). Methylates ribosomal protein L11. This Actinobacillus succinogenes (strain ATCC 55618 / DSM 22257 / CCUG 43843 / 130Z) protein is Ribosomal protein L11 methyltransferase.